The primary structure comprises 288 residues: 4-diphosphocytidyl-2-C-methyl-D-erythritol kinase (288 aa).

Residue lysine 8 is part of the active site. Residue 90-100 coordinates ATP; the sequence is PLEAGLAGGSA. Aspartate 132 is a catalytic residue.

The protein belongs to the GHMP kinase family. IspE subfamily.

It catalyses the reaction 4-CDP-2-C-methyl-D-erythritol + ATP = 4-CDP-2-C-methyl-D-erythritol 2-phosphate + ADP + H(+). It participates in isoprenoid biosynthesis; isopentenyl diphosphate biosynthesis via DXP pathway; isopentenyl diphosphate from 1-deoxy-D-xylulose 5-phosphate: step 3/6. In terms of biological role, catalyzes the phosphorylation of the position 2 hydroxy group of 4-diphosphocytidyl-2C-methyl-D-erythritol. The sequence is that of 4-diphosphocytidyl-2-C-methyl-D-erythritol kinase from Carboxydothermus hydrogenoformans (strain ATCC BAA-161 / DSM 6008 / Z-2901).